We begin with the raw amino-acid sequence, 345 residues long: Phosphoribosylformylglycinamidine cyclo-ligase (345 aa).

The protein belongs to the AIR synthase family.

The protein localises to the cytoplasm. The enzyme catalyses 2-formamido-N(1)-(5-O-phospho-beta-D-ribosyl)acetamidine + ATP = 5-amino-1-(5-phospho-beta-D-ribosyl)imidazole + ADP + phosphate + H(+). Its pathway is purine metabolism; IMP biosynthesis via de novo pathway; 5-amino-1-(5-phospho-D-ribosyl)imidazole from N(2)-formyl-N(1)-(5-phospho-D-ribosyl)glycinamide: step 2/2. The protein is Phosphoribosylformylglycinamidine cyclo-ligase of Aeromonas hydrophila subsp. hydrophila (strain ATCC 7966 / DSM 30187 / BCRC 13018 / CCUG 14551 / JCM 1027 / KCTC 2358 / NCIMB 9240 / NCTC 8049).